A 205-amino-acid chain; its full sequence is MENMKQVVVATKNMGKVREFAELFERFDLEVKSLHDFPHIEEVEETGETFEENAILKADSLSRQLNAIVIADDSGLIVDALNGKPGVYSARFAGEPKDDQANIDKVLQELNEVAFEKRKARFYCALAVAFPEGDKKPVIVNGTCEGFILEQRRGENGFGYDPIFYVEEYKKAMAELSSDEKNAISHRGRALRKLEEKIPEWFLGE.

Residue 11–16 (TKNMGK) coordinates substrate. 2 residues coordinate Mg(2+): E44 and D73. Residue D73 is the Proton acceptor of the active site. Residues S74, 158–161 (FGYD), K181, and 186–187 (HR) contribute to the substrate site.

The protein belongs to the HAM1 NTPase family. As to quaternary structure, homodimer. The cofactor is Mg(2+).

The enzyme catalyses XTP + H2O = XMP + diphosphate + H(+). The catalysed reaction is dITP + H2O = dIMP + diphosphate + H(+). It carries out the reaction ITP + H2O = IMP + diphosphate + H(+). In terms of biological role, pyrophosphatase that catalyzes the hydrolysis of nucleoside triphosphates to their monophosphate derivatives, with a high preference for the non-canonical purine nucleotides XTP (xanthosine triphosphate), dITP (deoxyinosine triphosphate) and ITP. Seems to function as a house-cleaning enzyme that removes non-canonical purine nucleotides from the nucleotide pool, thus preventing their incorporation into DNA/RNA and avoiding chromosomal lesions. The sequence is that of dITP/XTP pyrophosphatase from Bacillus thuringiensis subsp. konkukian (strain 97-27).